Here is a 613-residue protein sequence, read N- to C-terminus: YTH domain-containing family protein 2 (613 aa).

3 disordered regions span residues 1–43, 215–234, and 244–396; these read MSAS…AQPR, SQVS…AKTA, and AKPQ…TVPA. The tract at residues 2-397 is localization to mRNA processing bodies (P-bodies); sequence SASSLLEQRP…GMGGITVPAE (396 aa). Positions 16–27 are enriched in polar residues; it reads NKVQNGAVTQKD. Low complexity-rich tracts occupy residues 218-234, 295-307, and 345-360; these read STAP…AKTA, NGQP…PQPG, and PPQL…PSQP. An interaction with m6A-containing mRNAs region spans residues 398-613; that stretch reads PHPVLEKLRM…RMQDRQGRVK (216 aa). A YTH domain is found at 423 to 557; it reads GRVFIIKSYS…DKARQVLKII (135 aa). RNA is bound by residues 429–431, D435, 445–446, N475, W499, and W504; these read KSY and WC. Composition is skewed to basic and acidic residues over residues 578–587 and 604–613; these read EEEESVKKVE and RMQDRQGRVK. The interval 578-613 is disordered; sequence EEEESVKKVEVQGSDPYSNNSSRSHYRMQDRQGRVK.

This sequence belongs to the YTHDF family. YTHDF2 subfamily.

Its subcellular location is the cytoplasm. The protein resides in the cytosol. The protein localises to the P-body. It is found in the stress granule. It localises to the nucleus. In terms of biological role, specifically recognizes and binds N6-methyladenosine (m6A)-containing RNAs, and regulates their stability. M6A is a modification present at internal sites of mRNAs and some non-coding RNAs and plays a role in mRNA stability and processing. Acts as a regulator of mRNA stability by promoting degradation of m6A-containing mRNAs. The YTHDF paralogs (ythdf1, ythdf2 and ythdf3) share m6A-containing mRNAs targets and act redundantly to mediate mRNA degradation and cellular differentiation. Plays a key role in maternal-to-zygotic transition during early embryonic development, the process during which maternally inherited mRNAs are degraded: acts by binding m6A-containing maternal mRNAs and promoting their degradation. More than one-third of maternal mRNAs can be modified by m6A. Binding to m6A-containing mRNAs results in mRNA degradation. Also involved in hematopoietic stem cells specification by binding to m6A-containing mRNAs, such as notch1a, and promote their degradation. The decreased Notch signaling following notch1a degradation promotes endothelial to hematopoietic transition. Promotes formation of phase-separated membraneless compartments, such as P-bodies or stress granules, by undergoing liquid-liquid phase separation upon binding to mRNAs containing multiple m6A-modified residues: polymethylated mRNAs act as a multivalent scaffold for the binding of YTHDF proteins, juxtaposing their disordered regions and thereby leading to phase separation. The resulting mRNA-YTHDF complexes then partition into different endogenous phase-separated membraneless compartments, such as P-bodies, stress granules or neuronal RNA granules. The sequence is that of YTH domain-containing family protein 2 from Danio rerio (Zebrafish).